A 378-amino-acid polypeptide reads, in one-letter code: 3,6-diketocamphane 1,6-monooxygenase (378 aa).

FMN contacts are provided by residues histidine 10, serine 44, methionine 76, and 201–209 (TGFSYNSPS).

This sequence belongs to the bacterial luciferase oxidoreductase family. In terms of assembly, homodimer. Likely forms a loose transient complex with a P.putida flavin reductase that provides the required FMNH(2) to the enzyme.

The enzyme catalyses (1S,4S)-bornane-2,5-dione + FMNH2 + O2 = (1S,4S)-5-oxo-1,2-campholide + FMN + H2O + H(+). In terms of biological role, involved in the degradation and assimilation of (-)-camphor, which allows P.putida strain NCIMB 10007 to grow on this enantiomer of camphor as the sole carbon source. Catalyzes the FMNH(2)-dependent lactonization of 3,6-diketocamphane via a Baeyer-Villiger oxidation to produce the unstable lactone 5-oxo-1,2-campholide with (S,S) configuration, that presumably undergoes spontaneous hydrolysis to form 2-oxo-Delta(3)-4,5,5-trimethylcyclopentenylacetate. Is also able to convert (-)-camphor to the corresponding lactone in vitro. Shows no conversion of (+)-camphor, (+)-fenchone, (-)-fenchone, and (+)-nopinone. Acts on other bicyclic ketones but very poorly on a few 2- and 4-substituted monocyclic ketones. The polypeptide is 3,6-diketocamphane 1,6-monooxygenase (Pseudomonas putida (Arthrobacter siderocapsulatus)).